Consider the following 933-residue polypeptide: Isoleucine--tRNA ligase (933 aa).

Residues 57 to 67 (PYANGNIHVGH) carry the 'HIGH' region motif. Glu-554 contacts L-isoleucyl-5'-AMP. The 'KMSKS' region motif lies at 595–599 (KMSKS). Lys-598 is a binding site for ATP.

It belongs to the class-I aminoacyl-tRNA synthetase family. IleS type 1 subfamily. As to quaternary structure, monomer.

It is found in the cytoplasm. The enzyme catalyses tRNA(Ile) + L-isoleucine + ATP = L-isoleucyl-tRNA(Ile) + AMP + diphosphate. In terms of biological role, catalyzes the attachment of isoleucine to tRNA(Ile). As IleRS can inadvertently accommodate and process structurally similar amino acids such as valine, to avoid such errors it has two additional distinct tRNA(Ile)-dependent editing activities. One activity is designated as 'pretransfer' editing and involves the hydrolysis of activated Val-AMP. The other activity is designated 'posttransfer' editing and involves deacylation of mischarged Val-tRNA(Ile). The chain is Isoleucine--tRNA ligase from Streptococcus pyogenes serotype M3 (strain ATCC BAA-595 / MGAS315).